The following is a 744-amino-acid chain: Zinc finger protein 483 (744 aa).

One can recognise an SCAN box domain in the interval 52–134 (RQRFRWFCYS…TLIEDLTQML (83 aa)). The interval 137 to 156 (KDPVSQDSTVSQEENSKEDK) is disordered. In terms of domain architecture, KRAB spans 170–241 (ITLKDVAVNF…EEVSKSSRLD (72 aa)). Disordered regions lie at residues 263 to 308 (ESQQ…SPFG) and 350 to 385 (KEKT…KIHL). Residues 277-293 (NQGNSKGRVAQNKTLGS) show a composition bias toward polar residues. Basic and acidic residues-rich tracts occupy residues 298 to 308 (KKFDPDKSPFG) and 350 to 363 (KEKT…KSND). 11 C2H2-type zinc fingers span residues 439 to 461 (HKCS…RRIH), 467 to 489 (YMCN…HRTH), 495 to 517 (FKCD…QRIH), 523 to 545 (YKCK…QRIH), 551 to 573 (YTCS…QRIH), 579 to 601 (YKCG…QRIH), 607 to 629 (YLCN…QRLH), 635 to 657 (YKCN…QRIH), 663 to 685 (YKCK…HRIH), 691 to 713 (YECN…LKIH), and 719 to 741 (YECN…RGFH).

Belongs to the krueppel C2H2-type zinc-finger protein family.

The protein localises to the nucleus. Functionally, may be involved in transcriptional regulation. The polypeptide is Zinc finger protein 483 (ZNF483) (Homo sapiens (Human)).